A 339-amino-acid polypeptide reads, in one-letter code: Glyceraldehyde-3-phosphate dehydrogenase (339 aa).

NAD(+) contacts are provided by residues 12-13 (RI), Asp39, Arg84, and Ser127. Residues 157-159 (SCT), Thr188, Arg203, 216-217 (TG), and Arg239 each bind D-glyceraldehyde 3-phosphate. Cys158 acts as the Nucleophile in catalysis. Asn320 provides a ligand contact to NAD(+).

Belongs to the glyceraldehyde-3-phosphate dehydrogenase family. In terms of assembly, homotetramer.

Its subcellular location is the cytoplasm. It catalyses the reaction D-glyceraldehyde 3-phosphate + phosphate + NAD(+) = (2R)-3-phospho-glyceroyl phosphate + NADH + H(+). The protein operates within carbohydrate degradation; glycolysis; pyruvate from D-glyceraldehyde 3-phosphate: step 1/5. Its function is as follows. Catalyzes the oxidative phosphorylation of glyceraldehyde 3-phosphate (G3P) to 1,3-bisphosphoglycerate (BPG) using the cofactor NAD. The first reaction step involves the formation of a hemiacetal intermediate between G3P and a cysteine residue, and this hemiacetal intermediate is then oxidized to a thioester, with concomitant reduction of NAD to NADH. The reduced NADH is then exchanged with the second NAD, and the thioester is attacked by a nucleophilic inorganic phosphate to produce BPG. This Mycobacterium bovis (strain ATCC BAA-935 / AF2122/97) protein is Glyceraldehyde-3-phosphate dehydrogenase (gap).